The chain runs to 236 residues: Peptidase E (236 aa).

Residues S122, D137, and H159 each act as charge relay system in the active site.

Belongs to the peptidase S51 family.

The protein localises to the cytoplasm. The catalysed reaction is Dipeptidase E catalyzes the hydrolysis of dipeptides Asp-|-Xaa. It does not act on peptides with N-terminal Glu, Asn or Gln, nor does it cleave isoaspartyl peptides.. Its function is as follows. Hydrolyzes dipeptides containing N-terminal aspartate residues. May play a role in allowing the cell to use peptide aspartate to spare carbon otherwise required for the synthesis of the aspartate family of amino acids. The sequence is that of Peptidase E from Shewanella sp. (strain MR-4).